Reading from the N-terminus, the 446-residue chain is Nuclear distribution protein PAC1-1 (446 aa).

Residues Gln-9 to Asp-41 form the LisH domain. Positions Ile-60–Ala-86 form a coiled coil. 8 WD repeats span residues Ser-112–Lys-153, His-155–Arg-195, Gly-199–Thr-239, Thr-242–Ser-281, Gly-284–Leu-344, Gly-346–Lys-385, Ala-390–Arg-430, and Val-432–Met-446.

It belongs to the WD repeat LIS1/nudF family. In terms of assembly, self-associates. Interacts with NDL1 and dynein.

It localises to the cytoplasm. The protein localises to the cytoskeleton. The protein resides in the spindle pole. Functionally, positively regulates the activity of the minus-end directed microtubule motor protein dynein. May enhance dynein-mediated microtubule sliding by targeting dynein to the microtubule plus end. Required for nuclear migration during vegetative growth as well as development. Required for retrograde early endosome (EE) transport from the hyphal tip. Required for localization of dynein to the mitotic spindle poles. Recruits additional proteins to the dynein complex at SPBs. The polypeptide is Nuclear distribution protein PAC1-1 (Uncinocarpus reesii (strain UAMH 1704)).